The primary structure comprises 156 residues: Succinate dehydrogenase assembly factor 2-B, mitochondrial (156 aa).

A mitochondrion-targeting transit peptide spans Met-1–Leu-24.

This sequence belongs to the SDHAF2 family. In terms of assembly, interacts with the flavoprotein subunit within the SDH catalytic dimer.

The protein localises to the mitochondrion matrix. In terms of biological role, plays an essential role in the assembly of succinate dehydrogenase (SDH), an enzyme complex (also referred to as respiratory complex II) that is a component of both the tricarboxylic acid (TCA) cycle and the mitochondrial electron transport chain, and which couples the oxidation of succinate to fumarate with the reduction of ubiquinone (coenzyme Q) to ubiquinol. Required for flavinylation (covalent attachment of FAD) of the flavoprotein subunit of the SDH catalytic dimer. This is Succinate dehydrogenase assembly factor 2-B, mitochondrial from Drosophila simulans (Fruit fly).